The following is a 176-amino-acid chain: Ferritin, middle subunit (176 aa).

The region spanning 7–156 is the Ferritin-like diiron domain; the sequence is QNYHSDCEAA…DFITNLKRLG (150 aa). Positions 24, 59, 62, 104, 138, and 141 each coordinate Fe cation.

It belongs to the ferritin family. Oligomer of 24 subunits. The functional molecule is roughly spherical and contains a central cavity into which the polymeric mineral iron core is deposited.

The catalysed reaction is 4 Fe(2+) + O2 + 4 H(+) = 4 Fe(3+) + 2 H2O. Stores iron in a soluble, non-toxic, readily available form. Important for iron homeostasis. Has ferroxidase activity. Iron is taken up in the ferrous form and deposited as ferric hydroxides after oxidation. The chain is Ferritin, middle subunit from Aquarana catesbeiana (American bullfrog).